The primary structure comprises 1582 residues: Dynein axonemal assembly factor 1 homolog (1582 aa).

6 LRR repeats span residues 38-60 (RLNDVLYLHFQGYQCIENLDEYT), 61-82 (ELKSLWLESNAISEIQNLTKLT), 83-104 (KLKCLYLQNNLITKMENLEFNR), 105-126 (ELDTLNLSQNHIRKIENIGTDI), 129-150 (VLNTLNITSNYLTDSASLAALV), and 154-175 (TLSVLDLSNNRIDDILIVKIFE). The LRRCT domain maps to 189–227 (PVVSRLPQYRKTLILACKELTYLDSRPVFPRDRACAEAW). Disordered regions lie at residues 245–420 (AERR…SEMD), 560–587 (SSDVQEQAKDPSESDEEPTEEEMEVKSQ), 859–878 (FSKDTPESLDAQLAKDEDRR), 913–942 (DTGELEELPPPPELISDSESEKEVEEDDDA), 1073–1092 (SSNEDLEAKHKSNDDPLVER), 1101–1137 (MQRMKEHEERARELQEQLEKEKEEENSGPIKLSMGEG), 1150–1218 (TEII…QAEG), 1305–1345 (KDNE…TAKD), 1358–1438 (LDPE…PYQT), 1484–1517 (EDSKIGDGPTEKFLDQKAQDNTENTDERPENPKN), and 1529–1548 (PSESLEDTEATETPEVSTEQ). Over residues 313–327 (ESQASEHSTTSSTSA) the composition is skewed to low complexity. Residues 339–392 (HIAERISNRRVKPLEGRPKVLYDEAASGDEKAVTTTDSKKDSNAEDLPELKDIT) are compositionally biased toward basic and acidic residues. Residues 409-420 (TLLQSDSGSEMD) show a composition bias toward polar residues. Positions 572–582 (ESDEEPTEEEM) are enriched in acidic residues. Over residues 928 to 942 (SDSESEKEVEEDDDA) the composition is skewed to acidic residues. 2 stretches are compositionally biased toward basic and acidic residues: residues 1078–1092 (LEAKHKSNDDPLVER) and 1103–1125 (RMKEHEERARELQEQLEKEKEEE). Over residues 1166 to 1178 (EGGAQQEEGGAQS) the composition is skewed to low complexity. Basic and acidic residues-rich tracts occupy residues 1321–1335 (PKEEHIPEVKSETET), 1398–1427 (SALKETTEIGDSEKQENKTQDETLDPKDTE), and 1484–1514 (EDSKIGDGPTEKFLDQKAQDNTENTDERPEN). The span at 1529 to 1540 (PSESLEDTEATE) shows a compositional bias: acidic residues.

This sequence belongs to the DNAAF1 family.

The protein localises to the cell projection. It is found in the cilium. Functionally, cilium-specific protein required for cilia structures. This is Dynein axonemal assembly factor 1 homolog (dtr) from Drosophila pseudoobscura pseudoobscura (Fruit fly).